The sequence spans 351 residues: MVLLPAFLDGLARTVSTKKGKKLSEDEDGGREIAKSMIKDSKKNSTLLGTSGFVSSESSKRFTSICSNRGEKGINQDRAIVWEGFGCQEDITFCGMFDGHGPWGHVIAKRVKKSFPSSLLCQWQQTLASLSSSPECSSPFDLWKQACLKTFSIIDLDLKISPSIDSYCSGCTALTAVLQGDHLVIANAGDSRAVIATTSDDGNGLVPVQLSVDFKPNIPEEAERIKQSDGRLFCLDDEPGVYRVGMPNGGSLGLAVSRAFGDYCLKDFGLVSEPEVTYRKITDKDQFLILATDGMWDVMTNNEAVEIVRGVKERRKSAKRLVERAVTLWRRKRRSIAMDDISVLCLFFRPS.

The PPM-type phosphatase domain occupies 62–348 (FTSICSNRGE…DDISVLCLFF (287 aa)). Asp98, Gly99, Asp293, and Asp339 together coordinate Mn(2+).

The protein belongs to the PP2C family. Mg(2+) is required as a cofactor. The cofactor is Mn(2+).

The enzyme catalyses O-phospho-L-seryl-[protein] + H2O = L-seryl-[protein] + phosphate. It catalyses the reaction O-phospho-L-threonyl-[protein] + H2O = L-threonyl-[protein] + phosphate. The sequence is that of Probable protein phosphatase 2C 41 from Arabidopsis thaliana (Mouse-ear cress).